The following is an 89-amino-acid chain: Small ribosomal subunit protein uS15 (89 aa).

Belongs to the universal ribosomal protein uS15 family. In terms of assembly, part of the 30S ribosomal subunit. Forms a bridge to the 50S subunit in the 70S ribosome, contacting the 23S rRNA.

One of the primary rRNA binding proteins, it binds directly to 16S rRNA where it helps nucleate assembly of the platform of the 30S subunit by binding and bridging several RNA helices of the 16S rRNA. Its function is as follows. Forms an intersubunit bridge (bridge B4) with the 23S rRNA of the 50S subunit in the ribosome. The protein is Small ribosomal subunit protein uS15 of Magnetococcus marinus (strain ATCC BAA-1437 / JCM 17883 / MC-1).